The following is a 419-amino-acid chain: Probable pectate lyase C (419 aa).

The first 19 residues, 1–19 (MRLTPSLISCLSLLHFTSA), serve as a signal peptide directing secretion. N-linked (GlcNAc...) asparagine glycosylation is found at Asn48, Asn164, and Asn201. Arg204 is a catalytic residue. Positions 261–296 (NENFHAYVETNYYDSDKDGTLNGSELGVDSTNYGGM) constitute an EF-hand domain. 4 residues coordinate Ca(2+): Asp274, Asp276, Asp278, and Thr280. Asn282 carries N-linked (GlcNAc...) asparagine glycosylation. A Ca(2+)-binding site is contributed by Glu285. Residues 352 to 395 (ISDEADMGGAGDLDQGTTPTDTDGDGIPDDAEAELGTDPNTADS) are disordered. Positions 363–372 (DLDQGTTPTD) are enriched in low complexity. Positions 373–386 (TDGDGIPDDAEAEL) are enriched in acidic residues.

This sequence belongs to the polysaccharide lyase 1 family. Ca(2+) serves as cofactor.

Its subcellular location is the secreted. It catalyses the reaction Eliminative cleavage of (1-&gt;4)-alpha-D-galacturonan to give oligosaccharides with 4-deoxy-alpha-D-galact-4-enuronosyl groups at their non-reducing ends.. Functionally, pectinolytic enzyme consist of four classes of enzymes: pectin lyase, polygalacturonase, pectin methylesterase and rhamnogalacturonase. Among pectinolytic enzymes, pectin lyase is the most important in depolymerization of pectin, since it cleaves internal glycosidic bonds of highly methylated pectins. Favors pectate, the anion, over pectin, the methyl ester. In Aspergillus oryzae (strain ATCC 42149 / RIB 40) (Yellow koji mold), this protein is Probable pectate lyase C (plyC).